The primary structure comprises 503 residues: Activin receptor type-1-like (503 aa).

Residues 1-21 (MTLGSPRKGLLMLLMALVTQG) form the signal peptide. Residues 22–118 (DPVKPSRGPL…PSEQPGTDGQ (97 aa)) lie on the Extracellular side of the membrane. Disulfide bonds link Cys34–Cys51, Cys36–Cys41, and Cys46–Cys69. The interval 73-76 (HREL) is mediates specificity for BMP ligand. 2 cysteine pairs are disulfide-bonded: Cys77–Cys89 and Cys90–Cys95. A glycan (N-linked (GlcNAc...) asparagine) is linked at Asn98. The helical transmembrane segment at 119 to 141 (LALILGPVLALLALVALGVLGLW) threads the bilayer. Topologically, residues 142–503 (HVRRRQEKQR…NSPEKPKVIQ (362 aa)) are cytoplasmic. Ser155, Ser160, and Ser161 each carry phosphoserine. Positions 172 to 201 (SMLGDLLDSDCTTGSGSGLPFLVQRTVARQ) constitute a GS domain. Positions 202–492 (VALVECVGKG…LRIKKTLQKI (291 aa)) constitute a Protein kinase domain. Residues 208–216 (VGKGRYGEV) and Lys229 contribute to the ATP site. The active-site Proton acceptor is Asp330.

Belongs to the protein kinase superfamily. TKL Ser/Thr protein kinase family. TGFB receptor subfamily. In terms of assembly, interacts with TSC22D1/TSC-22. Requires Mg(2+) as cofactor. Mn(2+) serves as cofactor.

The protein localises to the cell membrane. It carries out the reaction L-threonyl-[receptor-protein] + ATP = O-phospho-L-threonyl-[receptor-protein] + ADP + H(+). The catalysed reaction is L-seryl-[receptor-protein] + ATP = O-phospho-L-seryl-[receptor-protein] + ADP + H(+). Functionally, type I receptor for TGF-beta family ligands BMP9/GDF2 and BMP10 and important regulator of normal blood vessel development. On ligand binding, forms a receptor complex consisting of two type II and two type I transmembrane serine/threonine kinases. Type II receptors phosphorylate and activate type I receptors which autophosphorylate, then bind and activate SMAD transcriptional regulators. May bind activin as well. This Homo sapiens (Human) protein is Activin receptor type-1-like (ACVRL1).